A 426-amino-acid chain; its full sequence is 5-methylthioadenosine/S-adenosylhomocysteine deaminase (426 aa).

The Zn(2+) site is built by histidine 60 and histidine 62. The substrate site is built by glutamate 89 and histidine 179. Residue histidine 206 coordinates Zn(2+). Residues glutamate 209 and aspartate 294 each contribute to the substrate site. Residue aspartate 294 participates in Zn(2+) binding.

It belongs to the metallo-dependent hydrolases superfamily. MTA/SAH deaminase family. The cofactor is Zn(2+).

The catalysed reaction is S-adenosyl-L-homocysteine + H2O + H(+) = S-inosyl-L-homocysteine + NH4(+). It catalyses the reaction S-methyl-5'-thioadenosine + H2O + H(+) = S-methyl-5'-thioinosine + NH4(+). Catalyzes the deamination of 5-methylthioadenosine and S-adenosyl-L-homocysteine into 5-methylthioinosine and S-inosyl-L-homocysteine, respectively. Is also able to deaminate adenosine. This chain is 5-methylthioadenosine/S-adenosylhomocysteine deaminase, found in Dictyoglomus thermophilum (strain ATCC 35947 / DSM 3960 / H-6-12).